Consider the following 236-residue polypeptide: Conserved regulator of innate immunity protein 3 (236 aa).

The transit peptide at 1 to 36 (MNTASLVRSLSRVALRSSQVVRMAAPRHFSQSAKVL) directs the protein to the mitochondrion.

Belongs to the MAM33 family.

It is found in the mitochondrion matrix. This is Conserved regulator of innate immunity protein 3 (cri-3) from Caenorhabditis elegans.